The following is a 156-amino-acid chain: Calglandulin (156 aa).

EF-hand domains follow at residues 8 to 43 (EQIT…IGIN), 44 to 79 (PTKR…YHEK), 82 to 117 (NQDE…AGEP), and 118 to 153 (LNEH…ESFK). Ca(2+) contacts are provided by aspartate 131, aspartate 133, aspartate 135, threonine 137, and glutamate 142.

Belongs to the calmodulin family. Calglandulin subfamily. Expressed by the venom gland.

Its subcellular location is the cytoplasm. May be involved in the cellular control mechanism of the secretion of toxins from the gland into the venom. This chain is Calglandulin, found in Hoplocephalus stephensii (Stephens's banded snake).